A 433-amino-acid chain; its full sequence is Protein disulfide-isomerase A6 homolog (433 aa).

The first 19 residues, methionine 1 to alanine 19, serve as a signal peptide directing secretion. Thioredoxin domains are found at residues phenylalanine 20 to threonine 119 and alanine 120 to alanine 267. Catalysis depends on nucleophile residues cysteine 55, cysteine 58, cysteine 186, and cysteine 189. Disulfide bonds link cysteine 55-cysteine 58 and cysteine 186-cysteine 189. N-linked (GlcNAc...) asparagine glycosylation occurs at asparagine 279. The tract at residues valine 405–leucine 433 is disordered. Over residues threonine 417 to leucine 433 the composition is skewed to acidic residues. Positions lysine 430 to leucine 433 match the Prevents secretion from ER motif.

Belongs to the protein disulfide isomerase family. In terms of assembly, interacts with Drpr (via extracellular region). As to expression, in the blastoderm embryo, expression starts at the anterior and posterior poles and later appears as broad stripes. Following gastrulation, expressed in midline precursor cells and the posterior head with low levels present throughout the embryo. During germ band extension, weak dorsoventral stripes of expression are evident. Midline expression begins and is retained throughout embryogenesis in clusters of cells in each segment in the central nervous system. At least some of the midline expression occurs in VUM neurons.

It localises to the endoplasmic reticulum lumen. The protein localises to the cell surface. The catalysed reaction is Catalyzes the rearrangement of -S-S- bonds in proteins.. In terms of biological role, binds to both apoptotic cells and phagocytes and promotes Drpr-dependent phagocytosis of apoptotic cells. This chain is Protein disulfide-isomerase A6 homolog, found in Drosophila melanogaster (Fruit fly).